A 140-amino-acid polypeptide reads, in one-letter code: Prepilin peptidase-dependent protein A (140 aa).

A propeptide spanning residues 1-23 (MLLLKASAICGKGNEGKRNKKGG) is cleaved from the precursor. F24 is subject to N-methylphenylalanine. A helical membrane pass occupies residues 24–44 (FTLIELTVVLAIMAIILMVIA).

The protein resides in the membrane. Its function is as follows. Not yet known. The polypeptide is Prepilin peptidase-dependent protein A (ppdA) (Clostridium perfringens (strain 13 / Type A)).